The following is a 2173-amino-acid chain: Mediator of DNA damage checkpoint protein 1 (2173 aa).

Residues 1–19 are compositionally biased toward acidic residues; the sequence is MEDTQAIDWDVEEEEETEQ. A disordered region spans residues 1–22; that stretch reads MEDTQAIDWDVEEEEETEQSSE. The tract at residues 1–150 is interaction with CHEK2; sequence MEDTQAIDWD…SRGPLTVEET (150 aa). The tract at residues 2 to 222 is interaction with the MRN complex; that stretch reads EDTQAIDWDV…PFAFNLNSDT (221 aa). Thr-4 is modified (phosphothreonine). One can recognise an FHA domain in the interval 54–105; sequence NVVGRMPDCSVALPFPSISKQHAEIEILAWDKAPILRDCGSLNGTQILRPPK. At Ser-108 the chain carries Phosphoserine. The interval 145–570 is required for nuclear localization (NLS1); the sequence is LTVEETPRVQ…PAKLLVVSLE (426 aa). Position 146 is a phosphothreonine (Thr-146). Phosphoserine occurs at positions 168, 176, 198, and 220. The disordered stretch occupies residues 198 to 320; it reads SDEEGHSPVL…PPGRPAEVHL (123 aa). Thr-222 bears the Phosphothreonine mark. Residues 227–244 show a composition bias toward low complexity; that stretch reads GQQSATEEASSAARRGAT. Residues 259 to 276 show a composition bias toward basic and acidic residues; sequence QLEKDQPSVKERDNDTKV. Position 301 is a phosphoserine (Ser-301). Phosphothreonine is present on Thr-303. Residues 308–320 are compositionally biased toward basic and acidic residues; it reads DSRPPGRPAEVHL. Phosphoserine is present on Ser-331. Thr-333 carries the phosphothreonine modification. The segment at 359–383 is disordered; it reads GTRGPGAPGLSHLQESQAGSDTDVE. 2 positions are modified to phosphoserine: Ser-374 and Ser-378. Thr-380 is modified (phosphothreonine). Phosphoserine is present on residues Ser-396, Ser-399, and Ser-404. Residue Thr-406 is modified to Phosphothreonine. Ser-413 carries the phosphoserine modification. A disordered region spans residues 444-515; that stretch reads LQRSQTTTGR…SSPGIHLERS (72 aa). Thr-451 is modified (phosphothreonine). At Ser-455 the chain carries Phosphoserine. A Phosphothreonine modification is found at Thr-457. 6 positions are modified to phosphoserine: Ser-487, Ser-497, Ser-500, Ser-506, Ser-507, and Ser-515. Thr-525 carries the post-translational modification Phosphothreonine. At Ser-592 the chain carries Phosphoserine. Residue Lys-618 forms a Glycyl lysine isopeptide (Lys-Gly) (interchain with G-Cter in SUMO1); alternate linkage. Lys-618 is covalently cross-linked (Glycyl lysine isopeptide (Lys-Gly) (interchain with G-Cter in SUMO2); alternate). Phosphoserine is present on Ser-631. Disordered regions lie at residues 652–697 and 773–1770; these read VDTD…EDPD and HLEA…TLRS. Positions 673–687 are enriched in basic and acidic residues; that stretch reads GREREQHVGRTKDSE. Acidic residues predominate over residues 688 to 697; it reads DNCDDSEDPD. 2 positions are modified to phosphoserine: Ser-782 and Ser-795. Residue Lys-814 is modified to N6-acetyllysine. 4 stretches are compositionally biased toward basic and acidic residues: residues 821–846, 853–864, 870–903, and 916–953; these read ETAE…ERQT, ELTRGIQDREQK, DTQR…KEIQ, and AFER…RGEP. Residues Ser-957, Ser-1000, Ser-1035, Ser-1070, and Ser-1088 each carry the phosphoserine modification. Residues 957-969 show a composition bias toward polar residues; it reads SQDQKGQASSPTS. Positions 1079–1090 are enriched in basic and acidic residues; sequence TIRKTGQDRSQE. The span at 1105–1115 shows a compositional bias: basic residues; it reads PKPKIITRKSS. The segment covering 1131–1156 has biased composition (polar residues); that stretch reads PSTSTAQPVTPKPTSQATRSRTNRSS. Residues 1150–1694 form an interaction with the PRKDC complex region; the sequence is SRTNRSSVKT…KNRSSVKTPE (545 aa). Low complexity predominate over residues 1157–1169; that stretch reads VKTPEPVVPTVPE. Residue Thr-1159 is modified to Phosphothreonine. The span at 1171 to 1189 shows a compositional bias: polar residues; sequence QPSTSTDQPVASEPTSQAT. Residue Thr-1200 is modified to Phosphothreonine. Ser-1237 is subject to Phosphoserine. A phosphothreonine mark is found at Thr-1241, Thr-1282, and Thr-1304. Low complexity predominate over residues 1280 to 1292; sequence VKTPEPVVPTVPE. Residues 1294 to 1320 are compositionally biased toward polar residues; it reads QPSTSTDQPVTSEPTSQATRGRTNRSS. Low complexity predominate over residues 1321–1333; it reads VKTPEPVVPTVPE. A compositionally biased stretch (polar residues) spans 1335–1353; it reads QPSTSTDQPVASEPTSQAT. Low complexity predominate over residues 1390–1402; the sequence is TSRTTRSRTNMSS. Polar residues-rich tracts occupy residues 1418-1434, 1456-1487, 1499-1527, and 1540-1559; these read PSTS…TYQP, KLQS…SVKS, QPST…SSVK, and QPST…QATR. A phosphoserine mark is found at Ser-1483 and Ser-1484. Lys-1486 carries the N6-acetyllysine modification. Phosphothreonine occurs at positions 1509 and 1550. Residues 1567-1578 are compositionally biased toward low complexity; it reads VKTPKIVVPTVP. The span at 1581–1598 shows a compositional bias: polar residues; that stretch reads QASTSTDQPVTSEPTSRT. Residues Thr-1617 and Thr-1632 each carry the phosphothreonine modification. Residues 1626–1639 show a composition bias toward polar residues; it reads STDQPITPKPTSRA. Phosphoserine is present on Ser-1648. 2 positions are modified to phosphothreonine: Thr-1651 and Thr-1673. A compositionally biased stretch (polar residues) spans 1664 to 1680; it reads PSTSRSQLVTPEPTSRA. At Ser-1688 the chain carries Phosphoserine. Phosphothreonine occurs at positions 1692, 1714, 1748, and 1755. Residues 1705–1721 show a composition bias toward polar residues; that stretch reads PTTSTDQPVTPKPTSRA. Over residues 1761-1770 the composition is skewed to polar residues; it reads QGSQSKTLRS. Phosphoserine is present on Ser-1765. Thr-1781 is modified (phosphothreonine). Residues 1782–2173 form a required for nuclear localization (NLS2) region; sequence PEFQSPVTTD…VLSPLEMSST (392 aa). Ser-1786 and Ser-1795 each carry phosphoserine. The segment at 1809–1971 is disordered; it reads RATGNPGSLT…NRSLRRTKLN (163 aa). Lys-1824 is covalently cross-linked (Glycyl lysine isopeptide (Lys-Gly) (interchain with G-Cter in SUMO2)). Ser-1859 is subject to Phosphoserine. A Glycyl lysine isopeptide (Lys-Gly) (interchain with G-Cter in SUMO2) cross-link involves residue Lys-1874. Position 1884 is a phosphothreonine (Thr-1884). Ser-1904 bears the Phosphoserine mark. Polar residues predominate over residues 1907–1920; sequence HQKQPQRGEVSQKT. Lys-1924 is covalently cross-linked (Glycyl lysine isopeptide (Lys-Gly) (interchain with G-Cter in SUMO1); alternate). Lys-1924 participates in a covalent cross-link: Glycyl lysine isopeptide (Lys-Gly) (interchain with G-Cter in SUMO2); alternate. Residues 1931–1941 are compositionally biased toward basic and acidic residues; the sequence is AEKPGKEEDVM. Thr-1942 bears the Phosphothreonine mark. BRCT domains are found at residues 1976–2054 and 2075–2166; these read APKV…EYVV and RERR…FVLS. Arg-2027 is modified (omega-N-methylarginine).

As to quaternary structure, homodimer. Interacts with H2AX, which requires phosphorylation of H2AX on 'Ser-139'. Interacts with the MRN complex, composed of MRE11, RAD50, and NBN. Interacts with CHEK2, which requires ATM-mediated phosphorylation of 'Thr-68' within the FHA domain of CHEK2. Interacts constitutively with the BRCA1-BARD1 complex, SMC1A and TP53BP1. Interacts with ATM and FANCD2, and these interactions are reduced upon DNA damage. Also interacts with the PRKDC complex, composed of XRCC6/KU70, XRCC5/KU80 and PRKDC/XRCC7. This interaction may be required for PRKDC autophosphorylation, which is essential for DNA double strand break (DSB) repair. When phosphorylated by ATM, interacts with RNF8 (via FHA domain). Interacts with CEP164. When phosphorylated, interacts with APTX (via FHA-like domain). Interacts (when phosphorylated) with TOPBP1; promoting TOPBP1 localization to DNA damage sites during mitosis. Interacts (when phosphorylated) with NBN; promoting NBN and MRN complex localization to DNA damage sites. Post-translationally, phosphorylated upon exposure to ionizing radiation (IR), ultraviolet radiation (UV), and hydroxyurea (HU). Phosphorylation in response to IR requires ATM, NBN, and possibly CHEK2. Also phosphorylated during the G2/M phase of the cell cycle and during activation of the mitotic spindle checkpoint. Phosphorylation at Thr-4 by ATM stabilizes and enhances homodimerization via the FHA domain. Phosphorylated at Ser-168 and Ser-198 by CK2 in response to DNA damage during mitosis, promoting interaction with TOPBP1. Phosphorylated by CK2 in response to DNA damage, promoting interaction with NBN and recruitment of the MRN complex to DNA damage sites. Sumoylation at Lys-1924 by PIAS4 following DNA damage promotes ubiquitin-mediated degradation. In terms of processing, ubiquitinated by RNF4, leading to proteasomal degradation; undergoes 'Lys-48'-linked polyubiquitination.

It is found in the nucleus. Its subcellular location is the chromosome. Its function is as follows. Histone reader protein required for checkpoint-mediated cell cycle arrest in response to DNA damage within both the S phase and G2/M phases of the cell cycle. Specifically recognizes and binds histone H2AX phosphorylated at 'Ser-139', a marker of DNA damage, serving as a scaffold for the recruitment of DNA repair and signal transduction proteins to discrete foci of DNA damage sites. Also required for downstream events subsequent to the recruitment of these proteins. These include phosphorylation and activation of the ATM, CHEK1 and CHEK2 kinases, and stabilization of TP53/p53 and apoptosis. ATM and CHEK2 may also be activated independently by a parallel pathway mediated by TP53BP1. Required for chromosomal stability during mitosis by promoting recruitment of TOPBP1 to DNA double strand breaks (DSBs): TOPBP1 forms filamentous assemblies that bridge MDC1 and tether broken chromosomes during mitosis. Required for the repair of DSBs via homologous recombination by promoting recruitment of NBN component of the MRN complex to DSBs. The chain is Mediator of DNA damage checkpoint protein 1 (MDC1) from Macaca mulatta (Rhesus macaque).